The chain runs to 294 residues: Tissue factor (294 aa).

Positions 1 to 28 (MAILVRPRLLAALAPTFLGCLLLQVIAG) are cleaved as a signal peptide. The Extracellular segment spans residues 29–251 (AGIPEKAFNL…TEQWKSFLGE (223 aa)). 2 N-linked (GlcNAc...) asparagine glycosylation sites follow: N37 and N57. An intrachain disulfide couples C75 to C83. Residues N169 and N200 are each glycosylated (N-linked (GlcNAc...) asparagine). C218 and C241 are oxidised to a cystine. The short motif at 245 to 247 (WKS) is the WKS motif element. Residues 252 to 274 (TLIIVGAVVLLATIFIILLSISL) form a helical membrane-spanning segment. Residue C275 is the site of S-palmitoyl cysteine attachment. At 275-294 (CKRRKNRAGQKGKNTPSRLA) the chain is on the cytoplasmic side.

Belongs to the tissue factor family. As to quaternary structure, interacts with HSPE; the interaction, inhibited by heparin, promotes the generation of activated factor X and activates coagulation in the presence of activated factor VII.

The protein localises to the membrane. In terms of biological role, initiates blood coagulation by forming a complex with circulating factor VII or VIIa. The [TF:VIIa] complex activates factors IX or X by specific limited proteolysis. TF plays a role in normal hemostasis by initiating the cell-surface assembly and propagation of the coagulation protease cascade. The chain is Tissue factor (F3) from Mus musculus (Mouse).